A 1748-amino-acid chain; its full sequence is Tight junction protein 1 (1748 aa).

The PDZ 1 domain maps to 23–110 (TVTLHRAPGF…NAKITIRRKK (88 aa)). Basic residues predominate over residues 102–112 (AKITIRRKKKV). A disordered region spans residues 102–189 (AKITIRRKKK…QPAKPTKVTL (88 aa)). Acidic residues predominate over residues 123–136 (PVSDNEEDSYDEEI). S125 carries the post-translational modification Phosphoserine. Y132 is subject to Phosphotyrosine. The span at 149-175 (RRSEKIWPRDRSASRERSLSPRSDRRS) shows a compositional bias: basic and acidic residues. 3 positions are modified to phosphoserine: S175, S178, and S179. Phosphothreonine is present on T185. In terms of domain architecture, PDZ 2 spans 186–264 (KVTLVKSRKN…KLKMVVQRDE (79 aa)). A phosphoserine mark is found at S212 and S241. A Phosphothreonine modification is found at T267. S275, S277, S280, S284, S290, S294, S297, S300, S323, S329, S334, S337, and S353 each carry phosphoserine. Positions 295 to 396 (LASDHSGRSH…PVYAQVGQPD (102 aa)) are disordered. The segment covering 299 to 327 (HSGRSHDRPPRRSRSRSPDQRSEPSDHSR) has biased composition (basic and acidic residues). A compositionally biased stretch (polar residues) spans 329–338 (SPQQPSNGSL). A Phosphothreonine modification is found at T354. A compositionally biased stretch (basic and acidic residues) spans 357–377 (KHADDHTPKTVEEVTVERNEK). Residues 421 to 502 (SMKLVKFRKG…GEEVTILAQK (82 aa)) form the PDZ 3 domain. An SH3 domain is found at 516–584 (GDSFYIRTHF…PNKNRAEQLA (69 aa)). The 182-residue stretch at 598–779 (RADFWRFRGL…TTTINLNSMN (182 aa)) folds into the Guanylate kinase-like domain. A phosphoserine mark is found at S617 and S622. Positions 633-876 (YERVVLREAG…GTPPESAITR (244 aa)) are occludin (OCLN)-binding region. A Phosphothreonine modification is found at T809. Phosphoserine is present on residues S810 and S821. The residue at position 822 (Y822) is a Phosphotyrosine. 3 positions are modified to phosphoserine: S824, S828, and S837. Disordered regions lie at residues 825–1081 (APGS…LRYE) and 1095–1587 (DDKQ…PEFD). Phosphothreonine is present on residues T846, T848, T854, T861, and T868. A compositionally biased stretch (basic and acidic residues) spans 879-892 (EPVREDSSGMHHEN). Low complexity predominate over residues 893–906 (QTYPPYSPQAQPQP). Residue S912 is modified to Phosphoserine. 2 stretches are compositionally biased toward polar residues: residues 934 to 953 (PETN…NLTN) and 963 to 979 (PSTS…TPST). The residue at position 968 (S968) is a Phosphoserine. Over residues 998 to 1014 (DPTKVYRKDPYPEEMMR) the composition is skewed to basic and acidic residues. Polar residues predominate over residues 1061-1072 (YESSSYTDQFSR). Phosphoserine occurs at positions 1071, 1111, and 1139. Basic and acidic residues predominate over residues 1110 to 1125 (HSQDLDSRQHPEESSE). 2 positions are modified to phosphotyrosine: Y1140 and Y1165. Residues 1151 to 1371 (RASALRHEEQ…FDRRSFENKP (221 aa)) are actin-binding region (ABR). 2 stretches are compositionally biased toward basic and acidic residues: residues 1269-1286 (KMFE…KDVN) and 1336-1347 (PPEDIVRSNHYD). Position 1354 is a phosphotyrosine (Y1354). Phosphoserine is present on S1366. Residues 1389-1400 (SQNQSNFSSYSS) show a composition bias toward low complexity. A compositionally biased stretch (basic and acidic residues) spans 1403–1420 (KPPEADGVDRSFGEKRYE). The residue at position 1413 (S1413) is a Phosphoserine. Polar residues-rich tracts occupy residues 1459–1470 (NSVSLDFQNSLV) and 1512–1522 (GTEQTQKTVTP). Residues 1538–1547 (PFERKFESPK) show a composition bias toward basic and acidic residues. Residues S1545 and S1617 each carry the phosphoserine modification. The region spanning 1634–1748 (ATARGIFNSN…NCVSVLIDHF (115 aa)) is the ZU5 domain.

It belongs to the MAGUK family. Homodimer. Forms heterodimers TJP3. Forms a heterodimer (via PDZ2 domain) with TJP2/ZO2 (via PDZ2 domain). Interacts with OCLN, CALM, claudins, CGN/cingulin, CXADR, GJA12, GJD3 and UBN1. Interacts (via ZU5 domain) with CDC42BPB and MYZAP. Interacts (via PDZ domain) with GJA1. Interacts (via PDZ domains) with ANKRD2. Interacts with POPDC1 (via the C-terminus cytoplasmic tail). Interacts with HSPA4 and KIRREL1. Interacts with DLL1. Interacts with USP53 (via the C-terminal region). Interacts (via ABR region) with F-actin. Interacts with DNMBP (via C-terminal domain); required for the apical cell-cell junction localization of DNMBP. Interacts with SPEF1. Interacts (via N-terminus) with CTNNA1. Interacts with CLDN18. Interacts with CLDN16 (via TRV motif); this is a prerequisite for anchoring of CLDN16 at the tight junction. Interacts with PKP1; the interaction facilitates TJP1/ZO-1 localization to the plasma membrane. Interacts with PATJ (via PDZ1-6 domains); the interaction is required for attachment and extension of TJP1/ZO1 condensates along the apical cell interface. Post-translationally, phosphorylated at tyrosine redidues in response to epidermal growth factor (EGF). This response is dependent on an intact actin microfilament system. Dephosphorylated by PTPRJ. In terms of tissue distribution, the alpha-containing isoform is found in most epithelial cell junctions. The short isoform is found both in endothelial cells and the highly specialized epithelial junctions of renal glomeruli and Sertoli cells of the seminiferous tubules.

The protein localises to the cell membrane. The protein resides in the cell junction. Its subcellular location is the tight junction. It is found in the gap junction. It localises to the cell projection. The protein localises to the podosome. Its function is as follows. TJP1, TJP2, and TJP3 are closely related scaffolding proteins that link tight junction (TJ) transmembrane proteins such as claudins, junctional adhesion molecules, and occludin to the actin cytoskeleton. Forms a multistranded TJP1/ZO1 condensate which elongates to form a tight junction belt, the belt is anchored at the apical cell membrane via interaction with PATJ. The tight junction acts to limit movement of substances through the paracellular space and as a boundary between the compositionally distinct apical and basolateral plasma membrane domains of epithelial and endothelial cells. Necessary for lumenogenesis, and particularly efficient epithelial polarization and barrier formation. Plays a role in the regulation of cell migration by targeting CDC42BPB to the leading edge of migrating cells. Plays an important role in podosome formation and associated function, thus regulating cell adhesion and matrix remodeling. With TJP2 and TJP3, participates in the junctional retention and stability of the transcription factor DBPA, but is not involved in its shuttling to the nucleus. May play a role in mediating cell morphology changes during ameloblast differentiation via its role in tight junctions. This Homo sapiens (Human) protein is Tight junction protein 1.